A 146-amino-acid chain; its full sequence is Ferredoxin-thioredoxin reductase catalytic chain, chloroplastic (146 aa).

The transit peptide at 1 to 31 directs the protein to the chloroplast; it reads MNLQAVSCSFGFLSSPLGVTPRTSFRRFVIR. Cysteine 85 is a [4Fe-4S] cluster binding site. Cysteine 87 acts as the Nucleophile in catalysis. A disulfide bridge links cysteine 87 with cysteine 117. Cysteine 104, cysteine 106, and cysteine 115 together coordinate [4Fe-4S] cluster.

Belongs to the ferredoxin thioredoxin reductase beta subunit family. As to quaternary structure, heterodimer of subunit A (variable subunit) and subunit B (catalytic subunit). Heterodimeric FTR forms a complex with ferredoxin and thioredoxin. [4Fe-4S] cluster is required as a cofactor.

It localises to the plastid. The protein localises to the chloroplast. The catalysed reaction is [thioredoxin]-disulfide + 2 reduced [2Fe-2S]-[ferredoxin] + 2 H(+) = [thioredoxin]-dithiol + 2 oxidized [2Fe-2S]-[ferredoxin]. Its function is as follows. Catalytic subunit of the ferredoxin-thioredoxin reductase (FTR), which catalyzes the two-electron reduction of thioredoxins by the electrons provided by reduced ferredoxin. This is Ferredoxin-thioredoxin reductase catalytic chain, chloroplastic from Arabidopsis thaliana (Mouse-ear cress).